Here is a 383-residue protein sequence, read N- to C-terminus: MGCAGSTLRSGASFEDSRLAAIEDSRFHEVGHHAQFEDSRLAAIEDSRFHEVGHHAQFDEGGRFKQLPPANDDAKLLVADHPSLGVIRLDYDYPPALGDVDHPGSFYYDVFYRVVPGLTFELCQSGELPDDVKQRFIDAITWLDEQGVAGITGDCGFFMYFQALARSVTSKPVFMSSLCQLPAVVCAYAADEHIALFTANGESLKPMRELIKKECGVDPDDTRFVIVGCEDVPGFEAVANGDRVDVDSVLPHLVRLAEDTVAKHAGTAKPIRAILFECTELPPYSDAVRAATRLPVFDSITCCNSMLASLMDNPRFGVNNWHLSWDGAHTAHRFGDNVPPHLKGKLVNREHPENVARWNASLAERSSFSSAQQESIGRGSREL.

Belongs to the aspartate/glutamate racemases family. ALMA1 subfamily. Homotetramer.

It catalyses the reaction S,S-dimethyl-beta-propiothetin = acrylate + dimethyl sulfide + H(+). Functionally, mediates cleavage of dimethylsulfoniopropionate (DMSP) into dimethyl sulfide (DMS) and acrylate. DMS is the principal form by which sulfur is transported from oceans to the atmosphere and is a key component of the ocean sulfur cycle. The polypeptide is Dimethylsulfoniopropionate lyase 6 (Emiliania huxleyi (strain CCMP1516)).